Consider the following 183-residue polypeptide: Large ribosomal subunit protein mL43 (183 aa).

Disordered stretches follow at residues 120-144 (HTDN…TGCG) and 162-183 (PGAL…AQAE). Residues 122-139 (DNPSIQGQWTPSPTNGLP) are compositionally biased toward polar residues. The span at 162–172 (PGALDRERDRI) shows a compositional bias: basic and acidic residues.

Belongs to the mitochondrion-specific ribosomal protein mL43 family. As to quaternary structure, component of the mitochondrial ribosome large subunit (39S) which comprises a 16S rRNA and about 50 distinct proteins. In terms of tissue distribution, ubiquitous with the highest levels in the liver, heart and kidneys. The skeletal muscle, brain and testis showed lower but detectable expression. Expression is coregulated with TWNK.

The protein localises to the mitochondrion. This chain is Large ribosomal subunit protein mL43 (Mrpl43), found in Mus musculus (Mouse).